The following is a 349-amino-acid chain: 2-oxoglutarate and iron-dependent oxygenase domain-containing protein 2 (349 aa).

Positions 214–308 (DSHRAFVVKY…RWNLVVWLRA (95 aa)) constitute a Fe2OG dioxygenase domain. Fe cation contacts are provided by histidine 234, aspartate 236, and histidine 289. Arginine 299 lines the 2-oxoglutarate pocket.

This sequence belongs to the OGFOD2 family. Requires Fe(2+) as cofactor. L-ascorbate is required as a cofactor.

This Mus musculus (Mouse) protein is 2-oxoglutarate and iron-dependent oxygenase domain-containing protein 2 (Ogfod2).